A 112-amino-acid chain; its full sequence is uncharacterized protein (112 aa).

A helical membrane pass occupies residues 82 to 104 (IFFGFSIIASYFLKFHLLYVILL).

The protein localises to the membrane. This is an uncharacterized protein from Pasteurella multocida (strain Pm70).